The sequence spans 1382 residues: Hepatocyte growth factor receptor (1382 aa).

Residues methionine 1–glycine 24 form the signal peptide. The Extracellular segment spans residues glutamate 25 to threonine 933. Positions glutamine 27–leucine 516 constitute a Sema domain. N-linked (GlcNAc...) asparagine glycans are attached at residues asparagine 45, asparagine 100, and asparagine 106. 4 disulfide bridges follow: cysteine 95/cysteine 101, cysteine 98/cysteine 160, cysteine 133/cysteine 141, and cysteine 173/cysteine 176. N-linked (GlcNAc...) asparagine glycans are attached at residues asparagine 203 and asparagine 359. 2 cysteine pairs are disulfide-bonded: cysteine 299-cysteine 364 and cysteine 386-cysteine 398. N-linked (GlcNAc...) asparagine glycosylation is found at asparagine 400 and asparagine 406. 4 disulfides stabilise this stretch: cysteine 521–cysteine 539, cysteine 527–cysteine 562, cysteine 530–cysteine 546, and cysteine 542–cysteine 552. 3 consecutive IPT/TIG domains span residues proline 564–valine 656, proline 658–arginine 740, and proline 743–valine 837. Threonine 583 carries an O-linked (Man) threonine glycan. N-linked (GlcNAc...) asparagine glycans are attached at residues asparagine 608 and asparagine 636. Threonine 677 and threonine 762 each carry an O-linked (Man) threonine glycan. N-linked (GlcNAc...) asparagine glycans are attached at residues asparagine 786, asparagine 880, and asparagine 931. The chain crosses the membrane as a helical span at residues glycine 934–methionine 956. Topologically, residues lysine 957–threonine 1382 are cytoplasmic. Serine 967 carries the phosphoserine modification. Threonine 978 bears the Phosphothreonine mark. Residues serine 991, serine 998, and serine 1001 each carry the phosphoserine modification. At tyrosine 1004 the chain carries Phosphotyrosine. The Protein kinase domain occupies valine 1079–isoleucine 1346. ATP is bound by residues isoleucine 1085 to valine 1093 and lysine 1111. Aspartate 1205 (proton acceptor) is an active-site residue. The segment at leucine 1213–threonine 1382 is interaction with RANBP9. Tyrosine 1231 bears the Phosphotyrosine mark. A phosphotyrosine; by autocatalysis mark is found at tyrosine 1235 and tyrosine 1236. At threonine 1290 the chain carries Phosphothreonine. The segment at tryptophan 1321 to valine 1360 is interaction with MUC20. Phosphotyrosine; by autocatalysis occurs at positions 1350 and 1357. At tyrosine 1366 the chain carries Phosphotyrosine.

This sequence belongs to the protein kinase superfamily. Tyr protein kinase family. Heterodimer made of an alpha chain (50 kDa) and a beta chain (145 kDa) which are disulfide linked. Binds PLXNB1. Interacts when phosphorylated with downstream effectors including STAT3, PIK3R1, SRC, PCLG1, GRB2 and GAB1. Interacts with SPSB1, SPSB2 and SPSB4. Interacts with INPP5D/SHIP1. When phosphorylated at Tyr-1357, interacts with INPPL1/SHIP2. Interacts with RANBP9 and RANBP10, as well as SPSB1, SPSB2, SPSB3 and SPSB4. SPSB1 binding occurs in the presence and in the absence of HGF, however HGF treatment has a positive effect on this interaction. Interacts with MUC20; prevents interaction with GRB2 and suppresses hepatocyte growth factor-induced cell proliferation. Interacts with GRB10. Interacts with PTPN1 and PTPN2. Interacts with HSP90AA1 and HSP90AB1; the interaction suppresses MET kinase activity. Interacts with tensin TNS3. Interacts (when phosphorylated) with tensin TNS4 (via SH2 domain); the interaction increases MET protein stability by inhibiting MET endocytosis and subsequent lysosomal degradation. Post-translationally, autophosphorylated in response to ligand binding on Tyr-1235 and Tyr-1236 in the kinase domain leading to further phosphorylation of Tyr-1350 and Tyr-1357 in the C-terminal multifunctional docking site. Dephosphorylated by PTPRJ at Tyr-1350 and Tyr-1366. Dephosphorylated by PTPN1 and PTPN2. Ubiquitinated. Ubiquitination by CBL regulates the receptor stability and activity through proteasomal degradation. In terms of processing, O-mannosylation of IPT/TIG domains by TMEM260 is required for protein maturation. O-mannosylated residues are composed of single mannose glycans that are not elongated or modified.

The protein localises to the membrane. It carries out the reaction L-tyrosyl-[protein] + ATP = O-phospho-L-tyrosyl-[protein] + ADP + H(+). Its activity is regulated as follows. In its inactive state, the C-terminal tail interacts with the catalytic domain and inhibits the kinase activity. Upon ligand binding, the C-terminal tail is displaced and becomes phosphorylated, thus increasing the kinase activity. Its function is as follows. Receptor tyrosine kinase that transduces signals from the extracellular matrix into the cytoplasm by binding to hepatocyte growth factor/HGF ligand. Regulates many physiological processes including proliferation, scattering, morphogenesis and survival. Ligand binding at the cell surface induces autophosphorylation of MET on its intracellular domain that provides docking sites for downstream signaling molecules. Following activation by ligand, interacts with the PI3-kinase subunit PIK3R1, PLCG1, SRC, GRB2, STAT3 or the adapter GAB1. Recruitment of these downstream effectors by MET leads to the activation of several signaling cascades including the RAS-ERK, PI3 kinase-AKT, or PLCgamma-PKC. The RAS-ERK activation is associated with the morphogenetic effects while PI3K/AKT coordinates prosurvival effects. During embryonic development, MET signaling plays a role in gastrulation, development and migration of muscles and neuronal precursors, angiogenesis and kidney formation. In adults, participates in wound healing as well as organ regeneration and tissue remodeling. Also promotes differentiation and proliferation of hematopoietic cells. The chain is Hepatocyte growth factor receptor (MET) from Eulemur macaco macaco (Black lemur).